The following is a 264-amino-acid chain: Alkaline ceramidase 1 (264 aa).

Residues 1 to 27 lie on the Lumenal side of the membrane; the sequence is MPSIFAYQSSEVDWCESNFQYSELVAE. Ca(2+)-binding residues include D13, W14, E16, N18, and E27. The chain crosses the membrane as a helical span at residues 28–48; the sequence is FYNTFSNIPFFIFGPLMMLLM. Topologically, residues 49-57 are cytoplasmic; the sequence is HPYAQKRSR. A helical membrane pass occupies residues 58–78; that stretch reads YIYVVWVLFMIIGLFSMYFHM. H77 provides a ligand contact to Zn(2+). Residues 79–81 are Lumenal-facing; sequence TLS. A helical membrane pass occupies residues 82–102; the sequence is FLGQLLDEIAILWLLGSGYSI. Residues 103 to 119 are Cytoplasmic-facing; that stretch reads WMPRCYFPSFLGGNRSQ. Residues 120 to 137 traverse the membrane as a helical segment; it reads FIRLVFITTVVSTLLSFL. A topological domain (lumenal) is located at residue R138. Residues 139–159 traverse the membrane as a helical segment; that stretch reads PTVNAYALNSIALHILYIVCQ. The Cytoplasmic portion of the chain corresponds to 160–176; sequence EYRKTSNKELRHLIEVS. The helical transmembrane segment at 177 to 197 threads the bilayer; sequence VVLWAVALTSWISDRLLCSFW. Topologically, residues 198 to 206 are lumenal; the sequence is QRIHFFYLH. Residues H206 and H210 each contribute to the Zn(2+) site. The helical transmembrane segment at 207-227 threads the bilayer; it reads SIWHVLISITFPYGMVTMALV. Residues 228-264 lie on the Cytoplasmic side of the membrane; that stretch reads DANYEMPGETLKVRYWPRDSWPVGLPYVEIRGDDKDC.

This sequence belongs to the alkaline ceramidase family. Requires Zn(2+) as cofactor. Mainly expressed in epidermis.

It localises to the endoplasmic reticulum membrane. The enzyme catalyses an N-acylsphing-4-enine + H2O = sphing-4-enine + a fatty acid. It carries out the reaction N-tetracosanoyl-sphing-4-enine + H2O = tetracosanoate + sphing-4-enine. It catalyses the reaction an N-acylsphinganine + H2O = sphinganine + a fatty acid. The catalysed reaction is N-(9Z-octadecenoyl)-sphing-4-enine + H2O = sphing-4-enine + (9Z)-octadecenoate. The enzyme catalyses N-(15Z-tetracosenoyl)-sphing-4-enine + H2O = (15Z)-tetracosenoate + sphing-4-enine. It functions in the pathway lipid metabolism; sphingolipid metabolism. Inhibited by sphingosine. Activity is Ca(2+)-dependent. Endoplasmic reticulum ceramidase that catalyzes the hydrolysis of ceramides into sphingosine and free fatty acids at alkaline pH. Ceramides, sphingosine, and its phosphorylated form sphingosine-1-phosphate are bioactive lipids that mediate cellular signaling pathways regulating several biological processes including cell proliferation, apoptosis and differentiation. Exhibits a strong substrate specificity towards the natural stereoisomer of ceramides with D-erythro-sphingosine as a backbone and has a higher activity towards very long-chain unsaturated fatty acids like the C24:1-ceramide. May also hydrolyze dihydroceramides to produce dihydrosphingosine. ACER1 is a skin-specific ceramidase that regulates the levels of ceramides, sphingosine and sphingosine-1-phosphate in the epidermis, mediates the calcium-induced differentiation of epidermal keratinocytes and more generally plays an important role in skin homeostasis. This Homo sapiens (Human) protein is Alkaline ceramidase 1.